Here is a 202-residue protein sequence, read N- to C-terminus: MDNALPEPEPLIALIEALRRLPGVGARSARRMAYHLLQHDVQGADMLGRALAGAVQNLRRCARCNSFTEDDVCVICANPKRDASLLCIVETPADQNVIESSHGYRGLYYVLMGRLAPLEGVGPRELDFQRVLDRAADGLVQEVILATNFTAEGETTAHFLGEALAERGLKVTRLARGVPAGSELEYVDAGTIAWALMERRAT.

Residues 61 to 76 (CARCNSFTEDDVCVIC) form a C4-type zinc finger. The Toprim domain maps to 84 to 179 (SLLCIVETPA…KVTRLARGVP (96 aa)).

The protein belongs to the RecR family.

Functionally, may play a role in DNA repair. It seems to be involved in an RecBC-independent recombinational process of DNA repair. It may act with RecF and RecO. This Bordetella avium (strain 197N) protein is Recombination protein RecR.